The chain runs to 599 residues: Elongation factor 4 (599 aa).

Residues 5–187 form the tr-type G domain; it reads SHIRNFSIIA…RLVQSIPAPE (183 aa). GTP-binding positions include 17 to 22 and 134 to 137; these read DHGKST and NKMD.

Belongs to the TRAFAC class translation factor GTPase superfamily. Classic translation factor GTPase family. LepA subfamily.

Its subcellular location is the cell inner membrane. The enzyme catalyses GTP + H2O = GDP + phosphate + H(+). Its function is as follows. Required for accurate and efficient protein synthesis under certain stress conditions. May act as a fidelity factor of the translation reaction, by catalyzing a one-codon backward translocation of tRNAs on improperly translocated ribosomes. Back-translocation proceeds from a post-translocation (POST) complex to a pre-translocation (PRE) complex, thus giving elongation factor G a second chance to translocate the tRNAs correctly. Binds to ribosomes in a GTP-dependent manner. The chain is Elongation factor 4 from Pseudomonas entomophila (strain L48).